We begin with the raw amino-acid sequence, 745 residues long: Serine/threonine-protein kinase GG21441 (745 aa).

Residues 49 to 73 are disordered; the sequence is RNQQQNVQKDFDSHNRDCDSPVSST. Basic and acidic residues predominate over residues 57–67; sequence KDFDSHNRDCD. Doublecortin domains follow at residues 159–245 and 315–398; these read LRIK…VEYN and RIVT…AEDF. The Protein kinase domain occupies 479–737; the sequence is YTLGRIIGDG…SEDILDHYWT (259 aa). ATP-binding positions include 485–493 and Lys-508; that span reads IGDGNFAIV. Residue Asp-600 is the Proton acceptor of the active site.

It belongs to the protein kinase superfamily. CAMK Ser/Thr protein kinase family. CaMK subfamily.

It catalyses the reaction L-seryl-[protein] + ATP = O-phospho-L-seryl-[protein] + ADP + H(+). The catalysed reaction is L-threonyl-[protein] + ATP = O-phospho-L-threonyl-[protein] + ADP + H(+). In Drosophila erecta (Fruit fly), this protein is Serine/threonine-protein kinase GG21441.